Reading from the N-terminus, the 451-residue chain is F-box only protein 47 (451 aa).

An F-box domain is found at 41–91; that stretch reads LGNFKVLPLEILHIILRYLSVKDIGMLSMVSKTVSQHIINYISTSSGSRRL.

As to quaternary structure, part of a SCF (SKP1-cullin-F-box) protein ligase complex.

Its function is as follows. Probably recognizes and binds to some phosphorylated proteins and promotes their ubiquitination and degradation. This is F-box only protein 47 (Fbxo47) from Mus musculus (Mouse).